The sequence spans 68 residues: Conotoxin Mi11.1 (68 aa).

Residues Met-1–Thr-26 form the signal peptide. 4 disulfide bridges follow: Cys-29–Cys-43, Cys-36–Cys-48, Cys-42–Cys-52, and Cys-47–Cys-56. Tyr-60 carries the post-translational modification Tyrosine amide. Residues Ala-64–Glu-68 constitute a propeptide that is removed on maturation.

It belongs to the conotoxin I2 superfamily. In terms of tissue distribution, expressed by the venom duct.

It localises to the secreted. The chain is Conotoxin Mi11.1 from Conus miles (Soldier cone).